A 79-amino-acid polypeptide reads, in one-letter code: Acyl carrier protein (79 aa).

A Carrier domain is found at 2 to 77 (SNIEERVKKI…QAIDYINAHA (76 aa)). Ser-37 carries the post-translational modification O-(pantetheine 4'-phosphoryl)serine.

Belongs to the acyl carrier protein (ACP) family. In terms of processing, 4'-phosphopantetheine is transferred from CoA to a specific serine of apo-ACP by AcpS. This modification is essential for activity because fatty acids are bound in thioester linkage to the sulfhydryl of the prosthetic group.

It is found in the cytoplasm. The protein operates within lipid metabolism; fatty acid biosynthesis. Carrier of the growing fatty acid chain in fatty acid biosynthesis. This chain is Acyl carrier protein, found in Thioalkalivibrio sulfidiphilus (strain HL-EbGR7).